The primary structure comprises 614 residues: 2-succinyl-5-enolpyruvyl-6-hydroxy-3-cyclohexene-1-carboxylate synthase (614 aa).

Belongs to the TPP enzyme family. MenD subfamily. As to quaternary structure, homodimer. Requires Mg(2+) as cofactor. It depends on Mn(2+) as a cofactor. Thiamine diphosphate serves as cofactor.

The catalysed reaction is isochorismate + 2-oxoglutarate + H(+) = 5-enolpyruvoyl-6-hydroxy-2-succinyl-cyclohex-3-ene-1-carboxylate + CO2. Its pathway is quinol/quinone metabolism; 1,4-dihydroxy-2-naphthoate biosynthesis; 1,4-dihydroxy-2-naphthoate from chorismate: step 2/7. It functions in the pathway quinol/quinone metabolism; menaquinone biosynthesis. Its function is as follows. Catalyzes the thiamine diphosphate-dependent decarboxylation of 2-oxoglutarate and the subsequent addition of the resulting succinic semialdehyde-thiamine pyrophosphate anion to isochorismate to yield 2-succinyl-5-enolpyruvyl-6-hydroxy-3-cyclohexene-1-carboxylate (SEPHCHC). This chain is 2-succinyl-5-enolpyruvyl-6-hydroxy-3-cyclohexene-1-carboxylate synthase, found in Sorangium cellulosum (strain So ce56) (Polyangium cellulosum (strain So ce56)).